A 553-amino-acid polypeptide reads, in one-letter code: MENIISIVKKDLKEIAQKFNISKDPIVEINKNNIDSHFSTTLALMSAKELKQNPIQLAENIKNELLQKDYYDQIEIAGPGFINIKLKTELLSTTIKNITTLKEAYGKNKIKNKIINIEYVSANPTGFLHVGHARNAVTGSVLEEVLKFDGYEVQTEFYTNDAGNQINILAVTVFVHYLWALGIETEKPANTYGGTFYDDLANIMIQKYGDKFKNLTFTETAISDEETHQIFRKEAVQHFLTEIKQQLKDFGVVIDHYSSEQEMYDTNQIEKLLKEYKEKNATYEADGALWLKTTEFGDDKDRVLVKKDGSLTYIVPDLATHNIRIQRTHADVLINIWGGDHHGYIPRMRAGLQLLGHNPDILEIEMVQMVRLIKDGKEYKMSKRKGTAVWLVDIMEMVGKDALRYMLASKSSSSHMDLDLDLVQQKNATNPVYYAQYATARCHSILNQADQKNIKANLNVSNLLSNKKEVELLLTLDNFNQVIQMSAKNRAPQLICEYIQTVCKQFHSYYADTKILDENDVPTSEARLGLVLSVLQVLTNAFNIIGVSALETM.

Positions 122–132 match the 'HIGH' region motif; sequence ANPTGFLHVGH.

Belongs to the class-I aminoacyl-tRNA synthetase family. Monomer.

The protein localises to the cytoplasm. The catalysed reaction is tRNA(Arg) + L-arginine + ATP = L-arginyl-tRNA(Arg) + AMP + diphosphate. This chain is Arginine--tRNA ligase, found in Mesoplasma florum (strain ATCC 33453 / NBRC 100688 / NCTC 11704 / L1) (Acholeplasma florum).